The following is a 481-amino-acid chain: Cysteine--tRNA ligase (481 aa).

Cys-27 is a Zn(2+) binding site. Positions 29-39 (PTVYNYAHIGN) match the 'HIGH' region motif. Cys-222, His-247, and Glu-251 together coordinate Zn(2+). The 'KMSKS' region motif lies at 279–283 (KMSKS). Lys-282 lines the ATP pocket.

Belongs to the class-I aminoacyl-tRNA synthetase family. Monomer. It depends on Zn(2+) as a cofactor.

The protein localises to the cytoplasm. It catalyses the reaction tRNA(Cys) + L-cysteine + ATP = L-cysteinyl-tRNA(Cys) + AMP + diphosphate. The sequence is that of Cysteine--tRNA ligase from Borrelia hermsii (strain HS1 / DAH).